Consider the following 335-residue polypeptide: GTPase Obg (335 aa).

The region spanning 1-158 (MFLDQITIEL…RQVELELKLI (158 aa)) is the Obg domain. One can recognise an OBG-type G domain in the interval 159–334 (ADIGLVGFPN…LNSLFTNRLS (176 aa)). GTP-binding positions include 165-172 (GFPNAGKS), 190-194 (FTTLQ), 215-218 (DIPG), 285-288 (NKID), and 315-317 (SGL). Residues S172 and T192 each contribute to the Mg(2+) site.

This sequence belongs to the TRAFAC class OBG-HflX-like GTPase superfamily. OBG GTPase family. As to quaternary structure, monomer. Mg(2+) serves as cofactor.

The protein resides in the cytoplasm. Its function is as follows. An essential GTPase which binds GTP, GDP and possibly (p)ppGpp with moderate affinity, with high nucleotide exchange rates and a fairly low GTP hydrolysis rate. Plays a role in control of the cell cycle, stress response, ribosome biogenesis and in those bacteria that undergo differentiation, in morphogenesis control. This is GTPase Obg from Chlamydia caviae (strain ATCC VR-813 / DSM 19441 / 03DC25 / GPIC) (Chlamydophila caviae).